We begin with the raw amino-acid sequence, 458 residues long: UDP-N-acetylglucosamine 1-carboxyvinyltransferase (458 aa).

34 to 35 contributes to the phosphoenolpyruvate binding site; sequence KN. UDP-N-acetyl-alpha-D-glucosamine is bound at residue R104. The active-site Proton donor is C128. C128 bears the 2-(S-cysteinyl)pyruvic acid O-phosphothioketal mark. UDP-N-acetyl-alpha-D-glucosamine contacts are provided by D320 and V342.

This sequence belongs to the EPSP synthase family. MurA subfamily.

It is found in the cytoplasm. The catalysed reaction is phosphoenolpyruvate + UDP-N-acetyl-alpha-D-glucosamine = UDP-N-acetyl-3-O-(1-carboxyvinyl)-alpha-D-glucosamine + phosphate. Its pathway is cell wall biogenesis; peptidoglycan biosynthesis. Cell wall formation. Adds enolpyruvyl to UDP-N-acetylglucosamine. The chain is UDP-N-acetylglucosamine 1-carboxyvinyltransferase from Prochlorococcus marinus (strain NATL2A).